A 202-amino-acid polypeptide reads, in one-letter code: Transmembrane gamma-carboxyglutamic acid protein 2 (202 aa).

An N-terminal signal peptide occupies residues methionine 1–serine 23. The propeptide occupies glutamate 24–arginine 49. In terms of domain architecture, Gla spans alanine 50–tyrosine 96. Topologically, residues alanine 50–serine 109 are extracellular. Cysteines 67 and 72 form a disulfide. 4-carboxyglutamate is present on glutamate 70. Residues leucine 110–tryptophan 130 traverse the membrane as a helical segment. Over tyrosine 131–histidine 202 the chain is Cytoplasmic. A disordered region spans residues cysteine 143 to histidine 202. Pro residues predominate over residues proline 158 to leucine 175. Positions leucine 175 to tyrosine 178 match the LPXY motif; mediates binding to WW domain-containing proteins motif. Residues proline 192–tyrosine 195 carry the PPXY motif; mediates binding to WW domain-containing proteins motif.

Interacts with NEDD4. Interacts (via cytoplasmic domain) with transcriptional coactivator YAP1. In terms of processing, gamma-carboxyglutamate residues are formed by vitamin K dependent carboxylation. These residues are essential for the binding of calcium. As to expression, widely expressed with highest levels in kidney. Also highly expressed in the thyroid.

The protein resides in the cell membrane. This chain is Transmembrane gamma-carboxyglutamic acid protein 2, found in Homo sapiens (Human).